Consider the following 196-residue polypeptide: Mitochondrial intermembrane space cysteine motif-containing protein MIX23 (196 aa).

Residues 99–114 carry the Cx14C motif motif; sequence CEKEAAEMKNETDQQC. Positions 178 to 192 match the Cx13C motif motif; sequence CEQNNDYLKEFTQFC.

It belongs to the MIX23 family.

Its subcellular location is the mitochondrion intermembrane space. Regulator of the mitochondrial protein import machinery that is localized in the mitochondrial intermembrane space (IMS) and facilitates the transport of proteins from the cytosol into the mitochondrial matrix. Not essential for mitochondrial protein import but induced and required when mitochondrial import is compromised. Stimulates or stabilizes the translocation into the mitochondria of proteins such as OXA1, ATP1 and COX12. The polypeptide is Mitochondrial intermembrane space cysteine motif-containing protein MIX23 (Saccharomyces cerevisiae (strain ATCC 204508 / S288c) (Baker's yeast)).